The primary structure comprises 357 residues: BLOC-1-related complex subunit 6 (357 aa).

Residues 20-196 (HQALVFGGGP…SGAGGGRRAT (177 aa)) form a disordered region. Low complexity predominate over residues 90–99 (GAGSRRGAPG). The segment covering 138 to 149 (EQQEEEDNDEEA) has biased composition (acidic residues). Over residues 150–162 (AAGSRAGRSFSSR) the composition is skewed to low complexity. Ser-168 is subject to Phosphoserine. Position 196 is a phosphothreonine (Thr-196). Residue Ser-199 is modified to Phosphoserine. Positions 227–256 (LSGAPPPPPSAPARPCPAPAPTPTPAIPPI) are disordered. Residues 230-256 (APPPPPSAPARPCPAPAPTPTPAIPPI) show a composition bias toward pro residues.

It belongs to the BORCS6 family. Component of the BLOC-one-related complex (BORC) which is composed of BLOC1S1, BLOC1S2, BORCS5, BORCS6, BORCS7, BORCS8, KXD1 and SNAPIN.

It is found in the lysosome membrane. In terms of biological role, as part of the BORC complex may play a role in lysosomes movement and localization at the cell periphery. Associated with the cytosolic face of lysosomes, the BORC complex may recruit ARL8B and couple lysosomes to microtubule plus-end-directed kinesin motor. The sequence is that of BLOC-1-related complex subunit 6 from Homo sapiens (Human).